The following is a 123-amino-acid chain: Histone H2B (123 aa).

The segment at 1-30 (MPPKTSGKAAKKAGKAQKNITKTDKKKKRK) is disordered. An N-methylproline; partial modification is found at proline 2. Lysine 44 carries the post-translational modification N6-succinyllysine. O-linked (GlcNAc) serine glycosylation occurs at serine 110. 2 positions are modified to N6-succinyllysine: lysine 114 and lysine 118. Residue lysine 118 forms a Glycyl lysine isopeptide (Lys-Gly) (interchain with G-Cter in ubiquitin) linkage.

The protein belongs to the histone H2B family. The nucleosome is a histone octamer containing two molecules each of H2A, H2B, H3 and H4 assembled in one H3-H4 heterotetramer and two H2A-H2B heterodimers. The octamer wraps approximately 147 bp of DNA. In terms of processing, phosphorylated by the catalytic component of the Dbf4-dependent kinase (DDK) complex Cdc7. Post-translationally, monoubiquitination of Lys-118 by Bre1 gives a specific tag for epigenetic transcriptional activation and is also prerequisite for histone H3 'Lys-4' and 'Lys-79' methylation. Deubiquitination of Lys-118 by the SAGA complex is involved in activating transcription of a large subset of genes. Methylation at Pro-2 increases upon heat shock. In terms of processing, glcNAcylation at Ser-110 promotes monoubiquitination of Lys-118. It fluctuates in response to extracellular glucose, and associates with transcribed genes.

It is found in the nucleus. Its subcellular location is the chromosome. Functionally, core component of nucleosome. Nucleosomes wrap and compact DNA into chromatin, limiting DNA accessibility to the cellular machineries which require DNA as a template. Histones thereby play a central role in transcription regulation, DNA repair, DNA replication and chromosomal stability. DNA accessibility is regulated via a complex set of post-translational modifications of histones, also called histone code, and nucleosome remodeling. This is Histone H2B (His2B) from Drosophila erecta (Fruit fly).